Consider the following 449-residue polypeptide: Galactosyl transferase CpsE (449 aa).

5 consecutive transmembrane segments (helical) span residues Val5–Phe22, Asp27–Arg46, Met59–Phe78, Ser88–Leu107, and Phe258–Pro280.

Belongs to the bacterial sugar transferase family.

Its subcellular location is the cell membrane. Galactosyl transferase is essential for the assembly of the group B streptococci (GBS) type III capsular polysaccharide. May be involved in the formation of either or both galactosidic bonds by catalyzing the addition of galactose to an oligosaccharide precursor or to a lipid intermediate. Type III capsular polysaccharide consists of a linear backbone with short side chains ending in residues of N-acetylneuraminic acid or sialic acid. The presence of sialic acid on the surface of the organism inhibits activation of the alternative pathway of complement and is thought to be an important element in the virulence function of the capsule. The polypeptide is Galactosyl transferase CpsE (cpsE) (Streptococcus agalactiae serotype III (strain NEM316)).